The sequence spans 140 residues: Aspartate 1-decarboxylase (140 aa).

The Schiff-base intermediate with substrate; via pyruvic acid role is filled by Ser-25. At Ser-25 the chain carries Pyruvic acid (Ser). Position 57 (Thr-57) interacts with substrate. Tyr-58 functions as the Proton donor in the catalytic mechanism. 73 to 75 lines the substrate pocket; it reads GAA.

Belongs to the PanD family. As to quaternary structure, heterooctamer of four alpha and four beta subunits. Requires pyruvate as cofactor. In terms of processing, is synthesized initially as an inactive proenzyme, which is activated by self-cleavage at a specific serine bond to produce a beta-subunit with a hydroxyl group at its C-terminus and an alpha-subunit with a pyruvoyl group at its N-terminus.

It is found in the cytoplasm. It carries out the reaction L-aspartate + H(+) = beta-alanine + CO2. Its pathway is cofactor biosynthesis; (R)-pantothenate biosynthesis; beta-alanine from L-aspartate: step 1/1. Functionally, catalyzes the pyruvoyl-dependent decarboxylation of aspartate to produce beta-alanine. This Persephonella marina (strain DSM 14350 / EX-H1) protein is Aspartate 1-decarboxylase.